An 83-amino-acid polypeptide reads, in one-letter code: Small ribosomal subunit protein uS17 (83 aa).

The protein belongs to the universal ribosomal protein uS17 family. In terms of assembly, part of the 30S ribosomal subunit.

Functionally, one of the primary rRNA binding proteins, it binds specifically to the 5'-end of 16S ribosomal RNA. This is Small ribosomal subunit protein uS17 from Campylobacter curvus (strain 525.92).